A 362-amino-acid polypeptide reads, in one-letter code: 3-dehydroquinate synthase (362 aa).

Residues 72-77, 106-110, 130-131, K143, and K152 contribute to the NAD(+) site; these read DGEAHK, GVIGD, and TT. Residues E185, H248, and H265 each coordinate Zn(2+).

It belongs to the sugar phosphate cyclases superfamily. Dehydroquinate synthase family. It depends on Co(2+) as a cofactor. Zn(2+) is required as a cofactor. Requires NAD(+) as cofactor.

The protein resides in the cytoplasm. It carries out the reaction 7-phospho-2-dehydro-3-deoxy-D-arabino-heptonate = 3-dehydroquinate + phosphate. The protein operates within metabolic intermediate biosynthesis; chorismate biosynthesis; chorismate from D-erythrose 4-phosphate and phosphoenolpyruvate: step 2/7. Catalyzes the conversion of 3-deoxy-D-arabino-heptulosonate 7-phosphate (DAHP) to dehydroquinate (DHQ). This chain is 3-dehydroquinate synthase, found in Laribacter hongkongensis (strain HLHK9).